The sequence spans 118 residues: Large ribosomal subunit protein bL19 (118 aa).

It belongs to the bacterial ribosomal protein bL19 family.

This protein is located at the 30S-50S ribosomal subunit interface and may play a role in the structure and function of the aminoacyl-tRNA binding site. The polypeptide is Large ribosomal subunit protein bL19 (Salinispora tropica (strain ATCC BAA-916 / DSM 44818 / JCM 13857 / NBRC 105044 / CNB-440)).